The chain runs to 225 residues: MVTHSKFPAAGMSRPLDTSLRLKTFSSKSEYQLVVNAVCKLQESGFYWSAVTGGEANLLLSAEPAGTFLIRDSSDQRHFFTLSVKTQSGTKNLRIQCEGGSFSLQSDPRSTQPVPRFDCVLKLVHHYMPPPGAPSFPAPPTEPSSEVSEQPPSQPLPGNPPRRAYYIYSGGEKIPLVLSRPLSSNVATLQHLCRKTVNGHLDSYEKVTQLPGAIREFLDQYDAPL.

The kinase inhibitory region (KIR) stretch occupies residues 22 to 33 (LKTFSSKSEYQL). The segment at 34–45 (VVNAVCKLQESG) is extended SH2 subdomain (ESS). The region spanning 46–142 (FYWSAVTGGE…APSFPAPPTE (97 aa)) is the SH2 domain. Residues 131–142 (PGAPSFPAPPTE) show a composition bias toward pro residues. The interval 131 to 162 (PGAPSFPAPPTEPSSEVSEQPPSQPLPGNPPR) is disordered. Residues 177–224 (VLSRPLSSNVATLQHLCRKTVNGHLDSYEKVTQLPGAIREFLDQYDAP) form the SOCS box domain.

Interacts with multiple activated proteins of the tyrosine kinase signaling pathway including IGF1 receptor, insulin receptor and JAK2. Binding to JAK2 is mediated through the KIR and SH2 domains to a phosphorylated tyrosine residue within the JAK2 JH1 domain. Binds specific activated tyrosine residues of the leptin, EPO, IL12, GSCF and gp130 receptors. Interaction with CSNK1E stabilizes SOCS3 protein. Component of the probable ECS(SOCS3) E3 ubiquitin-protein ligase complex which contains CUL5, RNF7/RBX2, Elongin BC complex and SOCS3. Interacts with CUL5, RNF7, ELOB and ELOC. Interacts with FGFR3. Interacts with INSR. Interacts with BCL10; this interaction may interfere with BCL10-binding with PELI2. Interacts with NOD2 (via CARD domain); the interaction promotes NOD2 degradation. Post-translationally, phosphorylated on tyrosine residues after stimulation by the cytokines, IL-2, EPO or IGF1.

Its pathway is protein modification; protein ubiquitination. SOCS family proteins form part of a classical negative feedback system that regulates cytokine signal transduction. SOCS3 is involved in negative regulation of cytokines that signal through the JAK/STAT pathway. Inhibits cytokine signal transduction by binding to tyrosine kinase receptors including IL6ST/gp130, LIF, erythropoietin, insulin, IL12, GCSF and leptin receptors. Binding to JAK2 inhibits its kinase activity and regulates IL6 signaling. Suppresses fetal liver erythropoiesis. Regulates onset and maintenance of allergic responses mediated by T-helper type 2 cells. Probable substrate recognition component of a SCF-like ECS (Elongin BC-CUL2/5-SOCS-box protein) E3 ubiquitin-protein ligase complex which mediates the ubiquitination and subsequent proteasomal degradation of target proteins. The chain is Suppressor of cytokine signaling 3 (SOCS3) from Canis lupus familiaris (Dog).